The sequence spans 218 residues: Ribose-5-phosphate isomerase A (218 aa).

Residues 28-31 (SGST), 81-84 (DGAD), and 94-97 (KGGG) contribute to the substrate site. Glutamate 103 serves as the catalytic Proton acceptor. Lysine 121 contacts substrate.

Belongs to the ribose 5-phosphate isomerase family. In terms of assembly, homodimer.

It catalyses the reaction aldehydo-D-ribose 5-phosphate = D-ribulose 5-phosphate. Its pathway is carbohydrate degradation; pentose phosphate pathway; D-ribose 5-phosphate from D-ribulose 5-phosphate (non-oxidative stage): step 1/1. In terms of biological role, catalyzes the reversible conversion of ribose-5-phosphate to ribulose 5-phosphate. The polypeptide is Ribose-5-phosphate isomerase A (Dichelobacter nodosus (strain VCS1703A)).